The chain runs to 247 residues: MSCAGEALAPGPAEQQCPVEAGGGRLGSPAHEACNEDNTEKDKRPATSGHTRCGLMRDQSIWPNPSAGELVRTQPERLPQLQTSAQEPGKEETGKIKNGGHTRMSNGNGIPHGAKHVSVENHKISAPVSQKMHRKIQSSLSVNNDISKKSKVNAVFSPKAASSPEDCCVHCILACLFCEFLTLCNIVLGQASCGICTSEACCCCCGDEMGDDCSCPCDMDCGIMDACCESSDCLEICMECCGICFPS.

Disordered regions lie at residues 1–67 and 80–110; these read MSCA…NPSA and QLQTSAQEPGKEETGKIKNGGHTRMSNGNGI. The region spanning 74–247 is the MDFI domain; that stretch reads QPERLPQLQT…MECCGICFPS (174 aa). A phosphoserine mark is found at serine 129 and serine 141.

This sequence belongs to the MDFI family. In terms of assembly, interacts with HAND1; the interaction sequesters Hand1 into the nucleolus and inhibits its activity. Interacts (via C-terminus) with ZIC2. Interacts (via C-terminus) with AXIN1, the histidine-rich region of CCNT1/cyclin-T and weakly with LEF1. Interacts with CCNT2. Interacts with GATA2. Interacts (via C-terminus) with Piezo channel composed of PIEZO1 or PIEZO2; the interaction prolongs Piezo channel inactivation. Palmitoylated. As to expression, in the embryo, robust expression is detected between 16.5 and 18.5 dpc in lung, kidney, and salivary glands. In the developing cardiovascular system, it is detected in lymphatic and cardiac valves (at protein level).

The protein resides in the cytoplasm. It localises to the secreted. Functionally, required to control the activity of various transcription factors through their sequestration in the cytoplasm. Retains nuclear Zic proteins ZIC1, ZIC2 and ZIC3 in the cytoplasm and inhibits their transcriptional activation. Modulates the expression from cellular promoters. Binds to the axin complex, resulting in an increase in the level of free beta-catenin. Affects axin-regulation of the WNT and JNK signaling pathways. Involved in the development of lymphatic vessel valves. Required to promote lymphatic endothelial cell migration, in a process that involves down-regulation of integrin beta 1 activation and control of cell adhesion to the extracellular matrix. Regulates the activity of mechanosensitive Piezo channel. This is MyoD family inhibitor domain-containing protein from Mus musculus (Mouse).